The primary structure comprises 620 residues: 1-deoxy-D-xylulose-5-phosphate synthase (620 aa).

Thiamine diphosphate is bound by residues His80 and 121–123 (GHS). Asp152 is a Mg(2+) binding site. Residues 153–154 (GA), Asn181, Tyr288, and Glu370 each bind thiamine diphosphate. Asn181 contacts Mg(2+).

It belongs to the transketolase family. DXPS subfamily. As to quaternary structure, homodimer. Mg(2+) serves as cofactor. Thiamine diphosphate is required as a cofactor.

It carries out the reaction D-glyceraldehyde 3-phosphate + pyruvate + H(+) = 1-deoxy-D-xylulose 5-phosphate + CO2. It functions in the pathway metabolic intermediate biosynthesis; 1-deoxy-D-xylulose 5-phosphate biosynthesis; 1-deoxy-D-xylulose 5-phosphate from D-glyceraldehyde 3-phosphate and pyruvate: step 1/1. In terms of biological role, catalyzes the acyloin condensation reaction between C atoms 2 and 3 of pyruvate and glyceraldehyde 3-phosphate to yield 1-deoxy-D-xylulose-5-phosphate (DXP). The protein is 1-deoxy-D-xylulose-5-phosphate synthase of Klebsiella pneumoniae subsp. pneumoniae (strain ATCC 700721 / MGH 78578).